A 108-amino-acid chain; its full sequence is DNA-directed RNA polymerase subunit omega (108 aa).

A disordered region spans residues 1-32; that stretch reads MTNSQSDAALAAVPDRFDPSAGGPGAYDTPLG.

The protein belongs to the RNA polymerase subunit omega family. In terms of assembly, the RNAP catalytic core consists of 2 alpha, 1 beta, 1 beta' and 1 omega subunit. When a sigma factor is associated with the core the holoenzyme is formed, which can initiate transcription.

The enzyme catalyses RNA(n) + a ribonucleoside 5'-triphosphate = RNA(n+1) + diphosphate. In terms of biological role, promotes RNA polymerase assembly. Latches the N- and C-terminal regions of the beta' subunit thereby facilitating its interaction with the beta and alpha subunits. The chain is DNA-directed RNA polymerase subunit omega from Mycobacterium avium (strain 104).